The primary structure comprises 130 residues: Small ribosomal subunit protein uS9 (130 aa).

It belongs to the universal ribosomal protein uS9 family.

The chain is Small ribosomal subunit protein uS9 from Burkholderia multivorans (strain ATCC 17616 / 249).